A 75-amino-acid polypeptide reads, in one-letter code: Gas vesicle protein S (75 aa).

The protein belongs to the gas vesicle GvpA family.

Its subcellular location is the gas vesicle. Probably a minor component of the gas vesicle. Gas vesicles are hollow, gas filled proteinaceous nanostructures found in some microorganisms. It is not clear what function gas vesicles perform in soil bacteria. The chain is Gas vesicle protein S from Streptomyces sp. (strain CB03234).